A 1856-amino-acid chain; its full sequence is Autophagy-related protein 2 (1856 aa).

Disordered stretches follow at residues 123–167, 229–283, 309–328, 395–428, 1157–1177, 1614–1647, and 1719–1741; these read NTND…TGNK, LRTL…GNES, KSAA…DKED, TKSR…DASH, LNGT…SSLM, MLGG…VEVA, and KLQP…EDED. Over residues 137–147 the composition is skewed to acidic residues; sequence ASEDDDEDDID. Residues 250 to 262 are compositionally biased toward polar residues; the sequence is KKQQGSDNDSPTD. Acidic residues predominate over residues 270–280; it reads NDNDDDDDDYG. The segment covering 412–424 has biased composition (acidic residues); sequence DNDEIPEDQSESD. Low complexity predominate over residues 1157–1170; that stretch reads LNGTENGSTSESSS. Residues 1621 to 1639 are compositionally biased toward polar residues; the sequence is SVRSPNLGGSDNRRNSNAS. The segment covering 1732–1741 has biased composition (acidic residues); it reads TEEEEDEDED.

The protein belongs to the ATG2 family.

The protein resides in the preautophagosomal structure membrane. It is found in the endoplasmic reticulum membrane. The catalysed reaction is a 1,2-diacyl-sn-glycero-3-phosphocholine(in) = a 1,2-diacyl-sn-glycero-3-phosphocholine(out). It catalyses the reaction a 1,2-diacyl-sn-glycero-3-phospho-L-serine(in) = a 1,2-diacyl-sn-glycero-3-phospho-L-serine(out). It carries out the reaction a 1,2-diacyl-sn-glycero-3-phosphoethanolamine(in) = a 1,2-diacyl-sn-glycero-3-phosphoethanolamine(out). Its function is as follows. Lipid transfer protein required for autophagosome completion and peroxisome degradation. Tethers the edge of the isolation membrane (IM) to the endoplasmic reticulum (ER) and mediates direct lipid transfer from ER to IM for IM expansion. ATG2/SPO72 binds to the ER exit site (ERES), which is the membrane source for autophagosome formation, using basic residues in its N-terminal region (NR) and to the expanding edge of the IM through its C-terminal region. The latter binding is assisted by an ATG18-PtdIns3P interaction. ATG2/SPO72 then extracts phospholipids from the membrane source using its NR and transfers them to ATG9 to the IM through its predicted beta-sheet-rich structure for membrane expansion. In Candida albicans (strain SC5314 / ATCC MYA-2876) (Yeast), this protein is Autophagy-related protein 2 (SPO72).